The following is a 151-amino-acid chain: UPF0756 membrane protein Moth_0120 (151 aa).

The next 4 membrane-spanning stretches (helical) occupy residues 6–26, 52–72, 75–95, and 111–131; these read VILI…IAAA, AGLI…RVAP, MLQS…IIAT, and MMIG…GIPV.

The protein belongs to the UPF0756 family.

It is found in the cell membrane. The chain is UPF0756 membrane protein Moth_0120 from Moorella thermoacetica (strain ATCC 39073 / JCM 9320).